The following is a 224-amino-acid chain: TM2 domain-containing protein amaretto (224 aa).

The N-terminal stretch at 1–18 is a signal peptide; that stretch reads MRIFYGLLAFLVARQHDA. The Extracellular segment spans residues 19–154; it reads QAIQARSDKE…FLRAGVPCVR (136 aa). Asn-102 and Asn-142 each carry an N-linked (GlcNAc...) asparagine glycan. The chain crosses the membrane as a helical span at residues 155-175; that stretch reads YTDHYFVTTLIYSMLLGFLGM. In terms of domain architecture, TM2 spans 157-205; the sequence is DHYFVTTLIYSMLLGFLGMDRFCLGQTGTAVGKLLTMGGVGVWWIIDVI. At 176-189 the chain is on the cytoplasmic side; it reads DRFCLGQTGTAVGK. Residues 190–210 traverse the membrane as a helical segment; that stretch reads LLTMGGVGVWWIIDVILLITN. Topologically, residues 211-224 are extracellular; sequence NLLPEDGSNWNPYV.

It belongs to the TM2 family.

The protein localises to the membrane. In terms of biological role, positive regulator of Notch signaling. Maternal neurogenic factor involved in Notch signaling-dependent neuroectodermal specification during early embryogenesis. Functions cooperatively with amx/TM2D3 and bisc/TM2D1. This chain is TM2 domain-containing protein amaretto, found in Drosophila melanogaster (Fruit fly).